A 178-amino-acid polypeptide reads, in one-letter code: Small ribosomal subunit protein uS4 (178 aa).

Residues 104-166 enclose the S4 RNA-binding domain; sequence RRLQTIVFRK…SNSPMASENH (63 aa). The interval 158–178 is disordered; that stretch reads NSPMASENHPERTAATSEENQ.

Belongs to the universal ribosomal protein uS4 family. In terms of assembly, part of the 30S ribosomal subunit. Contacts protein S5. The interaction surface between S4 and S5 is involved in control of translational fidelity.

Its function is as follows. One of the primary rRNA binding proteins, it binds directly to 16S rRNA where it nucleates assembly of the body of the 30S subunit. Functionally, with S5 and S12 plays an important role in translational accuracy. This is Small ribosomal subunit protein uS4 from Methanococcus maripaludis (strain DSM 14266 / JCM 13030 / NBRC 101832 / S2 / LL).